The primary structure comprises 1120 residues: Hachiman protein HamB (1120 aa).

Positions 278-452 constitute a Helicase ATP-binding domain; sequence DGELLKNDGF…WIGEDDKAKR (175 aa). ATP is bound at residue 291–298; the sequence is MPTSSGKT. The DEAH box motif lies at 395–398; that stretch reads DEGH. The region spanning 521-710 is the Helicase C-terminal domain; it reads ATATKMLDVG…NIEKATSGLY (190 aa).

Belongs to the helicase family.

Functionally, component of antiviral defense system Hachiman, composed of HamA and HamB. Expression of Hachiman in B.subtilis (strain BEST7003) confers resistance to phages phi105, phi29, phi3T, rho14, SBSphiJ, SpBeta and SPR. Probably a helicase. The sequence is that of Hachiman protein HamB from Bacillus cereus.